Here is a 240-residue protein sequence, read N- to C-terminus: MSLNKTIYEGKAKAIIETEDSSTVIQHFKDDVTAFNKEKYEIIESKGIINNHISAFIMEKLEKAEISTHFIKTLNEREQLVKKLKIIPLEVVVRNVAAGSFCKRFNIKEGERLASPIIDFFYKNDDLADPMVSENHILYFDWLSSKEMDEVKTTTLKINEILVHLFSNASIYLVDLKLEFGRLINDSTKIVLADEISPDNCRLWDKNTYKKLDKDVFRLNLGDLKEAYLEVAKRLSVKLG.

This sequence belongs to the SAICAR synthetase family.

The enzyme catalyses 5-amino-1-(5-phospho-D-ribosyl)imidazole-4-carboxylate + L-aspartate + ATP = (2S)-2-[5-amino-1-(5-phospho-beta-D-ribosyl)imidazole-4-carboxamido]succinate + ADP + phosphate + 2 H(+). Its pathway is purine metabolism; IMP biosynthesis via de novo pathway; 5-amino-1-(5-phospho-D-ribosyl)imidazole-4-carboxamide from 5-amino-1-(5-phospho-D-ribosyl)imidazole-4-carboxylate: step 1/2. The chain is Phosphoribosylaminoimidazole-succinocarboxamide synthase from Wolbachia sp. subsp. Drosophila simulans (strain wRi).